Reading from the N-terminus, the 253-residue chain is Major prion protein (253 aa).

The first 22 residues, 1–22 (MANLGCWMLVLFVATWSDLGLC), serve as a signal peptide directing secretion. The interval 23–230 (KKRPKPGGWN…ESQAYYQRGS (208 aa)) is interaction with GRB2, ERI3 and SYN1. The segment at 26–108 (PKPGGWNTGG…WNKPSKPKTN (83 aa)) is disordered. 5 repeat units span residues 51 to 59 (PQGGGGWGQ), 60 to 67 (PHGGGWGQ), 68 to 75 (PHGGGWGQ), 76 to 83 (PHGGGWGQ), and 84 to 91 (PHGGGWGQ). Residues 51 to 91 (PQGGGGWGQPHGGGWGQPHGGGWGQPHGGGWGQPHGGGWGQ) are 5 X 8 AA tandem repeats of P-H-G-G-G-W-G-Q. Gly residues predominate over residues 52–95 (QGGGGWGQPHGGGWGQPHGGGWGQPHGGGWGQPHGGGWGQGGGT). Cu(2+) is bound by residues H61, G62, G63, H69, G70, G71, H77, G78, G79, H85, G86, and G87. C179 and C214 are disulfide-bonded. N-linked (GlcNAc...) asparagine glycans are attached at residues N181 and N197. S230 carries GPI-anchor amidated serine lipidation. Residues 231–253 (SMVLFSSPPVILLISFLIFLIVG) constitute a propeptide, removed in mature form.

The protein belongs to the prion family. In terms of assembly, monomer and homodimer. Has a tendency to aggregate into amyloid fibrils containing a cross-beta spine, formed by a steric zipper of superposed beta-strands. Soluble oligomers may represent an intermediate stage on the path to fibril formation. Copper binding may promote oligomerization. Interacts with GRB2, APP, ERI3/PRNPIP and SYN1. Mislocalized cytosolically exposed PrP interacts with MGRN1; this interaction alters MGRN1 subcellular location and causes lysosomal enlargement. Interacts with KIAA1191.

Its subcellular location is the cell membrane. The protein localises to the golgi apparatus. In terms of biological role, its primary physiological function is unclear. Has cytoprotective activity against internal or environmental stresses. May play a role in neuronal development and synaptic plasticity. May be required for neuronal myelin sheath maintenance. May play a role in iron uptake and iron homeostasis. Soluble oligomers are toxic to cultured neuroblastoma cells and induce apoptosis (in vitro). Association with GPC1 (via its heparan sulfate chains) targets PRNP to lipid rafts. Also provides Cu(2+) or Zn(2+) for the ascorbate-mediated GPC1 deaminase degradation of its heparan sulfate side chains. The sequence is that of Major prion protein (PRNP) from Hylobates lar (Lar gibbon).